We begin with the raw amino-acid sequence, 406 residues long: Coiled-coil domain-containing glutamate-rich protein 1 (406 aa).

Disordered stretches follow at residues 43–72 (PGAPAYNRPHRYSPKTEYGPPRKQPKQQHG), 138–167 (GRKKRWGRRGRGLRHHPRHSYPRSPPADVS), 203–244 (QQEK…KETW), and 278–358 (EEEE…EEFH). Over residues 138-158 (GRKKRWGRRGRGLRHHPRHSY) the composition is skewed to basic residues. Coiled-coil stretches lie at residues 199-225 (EDMRQQEKVERQQEALRAQKATVSGEA) and 274-359 (LLVE…EFHL). A compositionally biased stretch (basic and acidic residues) spans 203–212 (QQEKVERQQE). Acidic residues-rich tracts occupy residues 278–294 (EEEEKKNDDEEEYDQEV) and 301–349 (SEEE…VLEE).

It localises to the nucleus. Regulator of histone epigenetic modifications and chromatin compaction into the sperm head, required for histone-to-protamine (HTP) transition. HTP is a key event in which somatic histones are first replaced by testis-specific histone variants, then transition proteins (TNPs) are incorporated into the spermatid nucleus, and finally protamines (PRMs) replace the TNPs to promote chromatin condensation. The sequence is that of Coiled-coil domain-containing glutamate-rich protein 1 (CCER1) from Homo sapiens (Human).